A 23-amino-acid chain; its full sequence is Phallacidin proprotein 1 (23 aa).

A propeptide is located at residue Pro-1. The segment at residues 2–8 is a cross-link (cyclopeptide (Ala-Pro)); sequence AWLVDCP. The segment at residues 3 to 7 is a cross-link (2'-cysteinyl-6'-hydroxytryptophan sulfoxide (Trp-Cys)); the sequence is WLVDC. Residues 9-23 constitute a propeptide that is removed on maturation; sequence CVGDDVNRLLTRGER.

It belongs to the MSDIN fungal toxin family. In terms of processing, processed by the macrocyclase-peptidase enzyme POPB to yield a toxic cyclic heptapeptide. POPB first removes 10 residues from the N-terminus. Conformational trapping of the remaining peptide forces the enzyme to release this intermediate rather than proceed to macrocyclization. The enzyme rebinds the remaining peptide in a different conformation and catalyzes macrocyclization of the N-terminal 7 residues.

In terms of biological role, toxin that belongs to the bicyclic heptapeptides called phallotoxins. Although structurally related to amatoxins, phallotoxins have a different mode of action, which is the stabilization of F-actin. Phallotoxins are poisonous when administered parenterally, but not orally because of poor absorption. This Amanita exitialis (Guangzhou destroying angel) protein is Phallacidin proprotein 1.